A 103-amino-acid chain; its full sequence is Cystatin-A (103 aa).

Position 1 is an N-acetylmethionine (methionine 1). Residues glutamine 52–glycine 56 carry the Secondary area of contact motif.

Belongs to the cystatin family.

The protein localises to the cytoplasm. In terms of biological role, this is an intracellular thiol proteinase inhibitor. This Rattus norvegicus (Rat) protein is Cystatin-A (Csta).